The primary structure comprises 728 residues: 1,4-alpha-glucan branching enzyme GlgB (728 aa).

Asp-405 functions as the Nucleophile in the catalytic mechanism. The active-site Proton donor is the Glu-458.

This sequence belongs to the glycosyl hydrolase 13 family. GlgB subfamily. Monomer.

The catalysed reaction is Transfers a segment of a (1-&gt;4)-alpha-D-glucan chain to a primary hydroxy group in a similar glucan chain.. It participates in glycan biosynthesis; glycogen biosynthesis. In terms of biological role, catalyzes the formation of the alpha-1,6-glucosidic linkages in glycogen by scission of a 1,4-alpha-linked oligosaccharide from growing alpha-1,4-glucan chains and the subsequent attachment of the oligosaccharide to the alpha-1,6 position. The protein is 1,4-alpha-glucan branching enzyme GlgB of Salmonella typhi.